A 239-amino-acid polypeptide reads, in one-letter code: Fatty acid metabolism regulator protein (239 aa).

Positions 6–74 constitute an HTH gntR-type domain; it reads QSPAGFAEEY…HGKPTKVNNF (69 aa). The segment at residues 34-53 is a DNA-binding region (H-T-H motif); that stretch reads ERELSELIGVTRTTLREVLQ.

Homodimer.

It localises to the cytoplasm. Functionally, multifunctional regulator of fatty acid metabolism. The polypeptide is Fatty acid metabolism regulator protein (Cronobacter sakazakii (strain ATCC BAA-894) (Enterobacter sakazakii)).